A 559-amino-acid polypeptide reads, in one-letter code: Probable D-2-hydroxyglutarate dehydrogenase, mitochondrial (559 aa).

The N-terminal 80 residues, Met1–Phe80, are a transit peptide targeting the mitochondrion. The FAD-binding PCMH-type domain occupies Tyr131–Lys310.

It belongs to the FAD-binding oxidoreductase/transferase type 4 family. Homodimer. Requires FAD as cofactor.

It is found in the mitochondrion. The enzyme catalyses (R)-2-hydroxyglutarate + A = 2-oxoglutarate + AH2. Functionally, catalyzes the oxidation of D-2-hydroxyglutarate to alpha-ketoglutarate. The sequence is that of Probable D-2-hydroxyglutarate dehydrogenase, mitochondrial (D2HGDH) from Oryza sativa subsp. indica (Rice).